We begin with the raw amino-acid sequence, 278 residues long: Probable endonuclease 4 (278 aa).

Residues H69, H109, E145, D179, H182, H214, D227, H229, and E259 each contribute to the Zn(2+) site.

It belongs to the AP endonuclease 2 family. Zn(2+) is required as a cofactor.

The catalysed reaction is Endonucleolytic cleavage to 5'-phosphooligonucleotide end-products.. Endonuclease IV plays a role in DNA repair. It cleaves phosphodiester bonds at apurinic or apyrimidinic (AP) sites, generating a 3'-hydroxyl group and a 5'-terminal sugar phosphate. The sequence is that of Probable endonuclease 4 from Bacteroides fragilis (strain ATCC 25285 / DSM 2151 / CCUG 4856 / JCM 11019 / LMG 10263 / NCTC 9343 / Onslow / VPI 2553 / EN-2).